The chain runs to 473 residues: Photosystem II CP43 reaction center protein (473 aa).

The propeptide occupies 1 to 14; the sequence is MKTLYSLRRFYPVE. An N-acetylthreonine modification is found at Thr15. Phosphothreonine is present on Thr15. A run of 5 helical transmembrane segments spans residues 69-93, 134-155, 178-200, 255-275, and 291-312; these read LFEVAHFVPEKPMYEQGLILLPHLA, LLGPETLEESFPFFGYVWKDRN, KALYFGGVYDTWAPGGGDVRKIT, KPFAWARRALVWSGEAYLSYS, and WFNNTAYPSEFYGPTGPEASQA. Glu367 contacts [CaMn4O5] cluster. The propeptide occupies 426–473; it reads LSTSHFVLGFFLFVGHLWHAGRARAAAAGFEKGIDRDFEPVLSMTPLN. Residues 447–471 traverse the membrane as a helical segment; that stretch reads RARAAAAGFEKGIDRDFEPVLSMTP.

It belongs to the PsbB/PsbC family. PsbC subfamily. In terms of assembly, PSII is composed of 1 copy each of membrane proteins PsbA, PsbB, PsbC, PsbD, PsbE, PsbF, PsbH, PsbI, PsbJ, PsbK, PsbL, PsbM, PsbT, PsbX, PsbY, PsbZ, Psb30/Ycf12, at least 3 peripheral proteins of the oxygen-evolving complex and a large number of cofactors. It forms dimeric complexes. Binds multiple chlorophylls and provides some of the ligands for the Ca-4Mn-5O cluster of the oxygen-evolving complex. It may also provide a ligand for a Cl- that is required for oxygen evolution. PSII binds additional chlorophylls, carotenoids and specific lipids. serves as cofactor. In terms of processing, over time a tryptophan in the fifth lumenal loop is converted to 2-hydroxy-2,3-dihydrotryptophan, 2-oxo-2,3-dihydrotryptophan, and kynurenine by oxidizing species from the active site. This oxidation targets the protein for turnover.

The protein localises to the plastid. The protein resides in the chloroplast thylakoid membrane. In terms of biological role, one of the components of the core complex of photosystem II (PSII). It binds chlorophyll and helps catalyze the primary light-induced photochemical processes of PSII. PSII is a light-driven water:plastoquinone oxidoreductase, using light energy to abstract electrons from H(2)O, generating O(2) and a proton gradient subsequently used for ATP formation. This Spinacia oleracea (Spinach) protein is Photosystem II CP43 reaction center protein.